The chain runs to 155 residues: Endoribonuclease YbeY (155 aa).

His120, His124, and His130 together coordinate Zn(2+).

It belongs to the endoribonuclease YbeY family. Zn(2+) is required as a cofactor.

It is found in the cytoplasm. Functionally, single strand-specific metallo-endoribonuclease involved in late-stage 70S ribosome quality control and in maturation of the 3' terminus of the 16S rRNA. This chain is Endoribonuclease YbeY, found in Staphylococcus aureus (strain MSSA476).